The chain runs to 795 residues: Protocadherin beta-5 (795 aa).

The N-terminal stretch at 1–30 (METALAKTPQKRQVMFLAILLLLWEAGSEA) is a signal peptide. Residues 31 to 689 (VRYSIPEETE…AQADSLTVYL (659 aa)) lie on the Extracellular side of the membrane. 5 Cadherin domains span residues 35-133 (IPEE…SPEF), 138-242 (MLLK…APEF), 247-346 (YEVQ…APEL), 351-450 (LSSP…APAF), and 455-560 (YTLF…SPFV). Asparagine 169 is a glycosylation site (N-linked (GlcNAc...) asparagine). Lysine 296 bears the N6-acetyllysine mark. N-linked (GlcNAc...) asparagine glycans are attached at residues asparagine 417 and asparagine 435. The N-linked (GlcNAc...) asparagine glycan is linked to asparagine 566. A Cadherin 6 domain is found at 567–670 (GSAPCTELVP…LVDGFSQPYL (104 aa)). The chain crosses the membrane as a helical span at residues 690–710 (VVALASVSSLFLFSVLLFVAV). Residues 711 to 795 (RLCRRSRAAP…AAFRNSFGLN (85 aa)) are Cytoplasmic-facing.

The protein localises to the cell membrane. In terms of biological role, potential calcium-dependent cell-adhesion protein. May be involved in the establishment and maintenance of specific neuronal connections in the brain. This is Protocadherin beta-5 (PCDHB5) from Pan troglodytes (Chimpanzee).